Consider the following 255-residue polypeptide: Type III pantothenate kinase (255 aa).

Asp-6–Val-13 contributes to the ATP binding site. Residues Tyr-100 and Gly-107–Arg-110 each bind substrate. Asp-109 acts as the Proton acceptor in catalysis. Asp-129 serves as a coordination point for K(+). Thr-132 contacts ATP. Residue Thr-184 participates in substrate binding.

It belongs to the type III pantothenate kinase family. As to quaternary structure, homodimer. NH4(+) is required as a cofactor. Requires K(+) as cofactor.

It is found in the cytoplasm. It carries out the reaction (R)-pantothenate + ATP = (R)-4'-phosphopantothenate + ADP + H(+). Its pathway is cofactor biosynthesis; coenzyme A biosynthesis; CoA from (R)-pantothenate: step 1/5. Its function is as follows. Catalyzes the phosphorylation of pantothenate (Pan), the first step in CoA biosynthesis. This is Type III pantothenate kinase from Thermoanaerobacter sp. (strain X514).